A 314-amino-acid chain; its full sequence is Cathepsin L 1 (314 aa).

An N-terminal signal peptide occupies residues 1-24 (MMLLGASLYLNNTQEVSDEIDTAN). A propeptide spans 25–109 (LYANWKMKYN…NAANSNFQYK (85 aa)) (activation peptide). 3 disulfides stabilise this stretch: Cys-132/Cys-175, Cys-166/Cys-207, and Cys-259/Cys-302. Cys-135 is an active-site residue. Residues His-265 and Asn-282 contribute to the active site.

It belongs to the peptidase C1 family.

The protein resides in the secreted. The catalysed reaction is Specificity close to that of papain. As compared to cathepsin B, cathepsin L exhibits higher activity toward protein substrates, but has little activity on Z-Arg-Arg-NHMec, and no peptidyl-dipeptidase activity.. In terms of biological role, may be involved in extracellular digestion. In Paramecium tetraurelia, this protein is Cathepsin L 1.